The chain runs to 460 residues: Proline--tRNA ligase (460 aa).

The protein belongs to the class-II aminoacyl-tRNA synthetase family. ProS type 3 subfamily. In terms of assembly, homodimer.

The protein resides in the cytoplasm. The enzyme catalyses tRNA(Pro) + L-proline + ATP = L-prolyl-tRNA(Pro) + AMP + diphosphate. Its function is as follows. Catalyzes the attachment of proline to tRNA(Pro) in a two-step reaction: proline is first activated by ATP to form Pro-AMP and then transferred to the acceptor end of tRNA(Pro). This chain is Proline--tRNA ligase, found in Methanococcus maripaludis (strain C5 / ATCC BAA-1333).